Reading from the N-terminus, the 288-residue chain is Small ribosomal subunit protein uS2 (288 aa).

The segment at 267 to 288 (EEVEEVEEEFIPSEIEDEDEKF) is disordered.

This sequence belongs to the universal ribosomal protein uS2 family.

The sequence is that of Small ribosomal subunit protein uS2 from Petrotoga mobilis (strain DSM 10674 / SJ95).